A 298-amino-acid chain; its full sequence is Lipoyl synthase 1 (298 aa).

Positions 34, 39, 45, 60, 64, 67, and 274 each coordinate [4Fe-4S] cluster. Positions 46–263 constitute a Radical SAM core domain; the sequence is FYQGTATFLM…RRLGESMGFL (218 aa).

Belongs to the radical SAM superfamily. Lipoyl synthase family. [4Fe-4S] cluster serves as cofactor.

The protein resides in the cytoplasm. It catalyses the reaction [[Fe-S] cluster scaffold protein carrying a second [4Fe-4S](2+) cluster] + N(6)-octanoyl-L-lysyl-[protein] + 2 oxidized [2Fe-2S]-[ferredoxin] + 2 S-adenosyl-L-methionine + 4 H(+) = [[Fe-S] cluster scaffold protein] + N(6)-[(R)-dihydrolipoyl]-L-lysyl-[protein] + 4 Fe(3+) + 2 hydrogen sulfide + 2 5'-deoxyadenosine + 2 L-methionine + 2 reduced [2Fe-2S]-[ferredoxin]. Its pathway is protein modification; protein lipoylation via endogenous pathway; protein N(6)-(lipoyl)lysine from octanoyl-[acyl-carrier-protein]: step 2/2. Its function is as follows. Catalyzes the radical-mediated insertion of two sulfur atoms into the C-6 and C-8 positions of the octanoyl moiety bound to the lipoyl domains of lipoate-dependent enzymes, thereby converting the octanoylated domains into lipoylated derivatives. This is Lipoyl synthase 1 from Thermosynechococcus vestitus (strain NIES-2133 / IAM M-273 / BP-1).